Here is a 342-residue protein sequence, read N- to C-terminus: Ketol-acid reductoisomerase (NADP(+)) (342 aa).

The region spanning 2–182 (AELFYDDDAD…GGLRAAGIKT (181 aa)) is the KARI N-terminal Rossmann domain. NADP(+) is bound by residues 25-28 (YGSQ), R48, S51, S53, and 83-86 (DQHQ). The active site involves H108. G134 contacts NADP(+). The region spanning 183–328 (TFTEETETDL…RELRKLFAWV (146 aa)) is the KARI C-terminal knotted domain. Mg(2+) contacts are provided by D191, E195, E227, and E231. Residue S252 coordinates substrate.

Belongs to the ketol-acid reductoisomerase family. Requires Mg(2+) as cofactor.

It carries out the reaction (2R)-2,3-dihydroxy-3-methylbutanoate + NADP(+) = (2S)-2-acetolactate + NADPH + H(+). It catalyses the reaction (2R,3R)-2,3-dihydroxy-3-methylpentanoate + NADP(+) = (S)-2-ethyl-2-hydroxy-3-oxobutanoate + NADPH + H(+). The protein operates within amino-acid biosynthesis; L-isoleucine biosynthesis; L-isoleucine from 2-oxobutanoate: step 2/4. It participates in amino-acid biosynthesis; L-valine biosynthesis; L-valine from pyruvate: step 2/4. Its function is as follows. Involved in the biosynthesis of branched-chain amino acids (BCAA). Catalyzes an alkyl-migration followed by a ketol-acid reduction of (S)-2-acetolactate (S2AL) to yield (R)-2,3-dihydroxy-isovalerate. In the isomerase reaction, S2AL is rearranged via a Mg-dependent methyl migration to produce 3-hydroxy-3-methyl-2-ketobutyrate (HMKB). In the reductase reaction, this 2-ketoacid undergoes a metal-dependent reduction by NADPH to yield (R)-2,3-dihydroxy-isovalerate. The polypeptide is Ketol-acid reductoisomerase (NADP(+)) (Beutenbergia cavernae (strain ATCC BAA-8 / DSM 12333 / CCUG 43141 / JCM 11478 / NBRC 16432 / NCIMB 13614 / HKI 0122)).